The primary structure comprises 155 residues: Small ribosomal subunit protein uS7c (155 aa).

This sequence belongs to the universal ribosomal protein uS7 family. Part of the 30S ribosomal subunit.

Its subcellular location is the plastid. The protein resides in the chloroplast. Its function is as follows. One of the primary rRNA binding proteins, it binds directly to 16S rRNA where it nucleates assembly of the head domain of the 30S subunit. This chain is Small ribosomal subunit protein uS7c (rps7), found in Pinus thunbergii (Japanese black pine).